Reading from the N-terminus, the 1708-residue chain is 187-kDa microtubule-associated protein AIR9 (1708 aa).

Polar residues predominate over residues 67–93 (SSLRVSGTTPVTIRRNSTGGVTENLAG). The segment at 67–255 (SSLRVSGTTP…KTSTPESRDS (189 aa)) is disordered. Residues 110 to 121 (DPVRRSLPELRK) show a composition bias toward basic and acidic residues. Positions 122–134 (SSVSSLSAKTVSK) are enriched in low complexity. Positions 149-165 (GSRSLTKSTGFSLSKPE) are enriched in polar residues. The segment covering 173–234 (SVSVSSKRAP…SIRSKSFSSP (62 aa)) has biased composition (low complexity). LRR repeat units follow at residues 267 to 290 (AGDD…GLHL), 291 to 315 (SPNL…ILNR), 316 to 335 (VKVL…EPLE), 337 to 359 (CKML…LPQL), 360 to 382 (PNLE…SQPR), 384 to 402 (QVLA…FPYL), and 403 to 425 (PVLE…EAAS). A9 repeat units lie at residues 489-584 (PSGY…FAIS), 601-682 (LNGE…QYKY), 698-777 (ITGD…VSTS), 793-878 (IVGD…VYVL), 895-977 (ITGD…RSCM), 994-1073 (VVGA…AISE), 1090-1167 (FLGS…RSIR), 1183-1272 (IPDC…VVVI), 1287-1365 (VRVK…KMSE), 1382-1473 (FTGK…AYAE), and 1489-1569 (IEGQ…VSAS).

In terms of assembly, interacts with KCBP. Strongly expressed in dividing cells, like the meristemic region of the root tip.

The protein resides in the cytoplasm. It is found in the cell cortex. The protein localises to the cytoskeleton. Its subcellular location is the phragmoplast. Microtubule-associated protein that may be involved in the maturation of cell plates and proper insertion of cross-walls after cytokinesis. This is 187-kDa microtubule-associated protein AIR9 from Arabidopsis thaliana (Mouse-ear cress).